The chain runs to 175 residues: S-fimbrial protein subunit SfaG (175 aa).

An N-terminal signal peptide occupies residues 1 to 27; that stretch reads MVKDIIKTVTFSCMLAGSMFVTCHVCA. The cysteines at positions 43 and 83 are disulfide-linked.

The protein belongs to the fimbrial protein family.

It is found in the fimbrium. In terms of biological role, fimbriae (also called pili), polar filaments radiating from the surface of the bacterium to a length of 0.5-1.5 micrometers and numbering 100-300 per cell, enable bacteria to colonize the epithelium of specific host organs. Its function is as follows. A minor fimbrial subunit. This protein is necessary for full expression of S-specific binding. S-fimbrial adhesins enable pathogenic E.coli causing urinary-tract infections or newborn meningitis to attach to glycoproteins terminating with alpha-sialic acid-(2-3)-beta-Gal. This is S-fimbrial protein subunit SfaG (sfaG) from Escherichia coli O6:K15:H31 (strain 536 / UPEC).